The following is a 451-amino-acid chain: Chromosomal replication initiator protein DnaA (451 aa).

The segment at 1–73 is domain I, interacts with DnaA modulators; it reads MNAHPKEIWE…IRSLQMVTSQ (73 aa). Residues 73-112 are domain II; it reads QKYNVKFLISSELPEEFLTLDTINEQNIKGSIIVSDEMSA. Positions 113–329 are domain III, AAA+ region; the sequence is MLNPKYTFTS…GALIRIVAFS (217 aa). ATP-binding residues include glycine 157, glycine 159, lysine 160, and threonine 161. The tract at residues 330–451 is domain IV, binds dsDNA; sequence SLTNKEISVD…NDLTKRLDQQ (122 aa).

The protein belongs to the DnaA family. In terms of assembly, oligomerizes as a right-handed, spiral filament on DNA at oriC.

It is found in the cytoplasm. Plays an essential role in the initiation and regulation of chromosomal replication. ATP-DnaA binds to the origin of replication (oriC) to initiate formation of the DNA replication initiation complex once per cell cycle. Binds the DnaA box (a 9 base pair repeat at the origin) and separates the double-stranded (ds)DNA. Forms a right-handed helical filament on oriC DNA; dsDNA binds to the exterior of the filament while single-stranded (ss)DNA is stabiized in the filament's interior. The ATP-DnaA-oriC complex binds and stabilizes one strand of the AT-rich DNA unwinding element (DUE), permitting loading of DNA polymerase. After initiation quickly degrades to an ADP-DnaA complex that is not apt for DNA replication. Binds acidic phospholipids. The chain is Chromosomal replication initiator protein DnaA from Clostridium kluyveri (strain NBRC 12016).